The following is a 416-amino-acid chain: LL-diaminopimelate aminotransferase (416 aa).

Substrate is bound by residues Tyr15 and Gly42. Pyridoxal 5'-phosphate is bound by residues Tyr72, 108–109 (SK), Tyr132, Asn187, Tyr218, and 246–248 (SFS). Substrate is bound by residues Lys109, Tyr132, and Asn187. Position 249 is an N6-(pyridoxal phosphate)lysine (Lys249). Residues Arg257 and Asn292 each coordinate pyridoxal 5'-phosphate. Residues Asn292 and Arg388 each contribute to the substrate site.

This sequence belongs to the class-I pyridoxal-phosphate-dependent aminotransferase family. LL-diaminopimelate aminotransferase subfamily. In terms of assembly, homodimer. Pyridoxal 5'-phosphate is required as a cofactor.

The catalysed reaction is (2S,6S)-2,6-diaminopimelate + 2-oxoglutarate = (S)-2,3,4,5-tetrahydrodipicolinate + L-glutamate + H2O + H(+). It functions in the pathway amino-acid biosynthesis; L-lysine biosynthesis via DAP pathway; LL-2,6-diaminopimelate from (S)-tetrahydrodipicolinate (aminotransferase route): step 1/1. Involved in the synthesis of meso-diaminopimelate (m-DAP or DL-DAP), required for both lysine and peptidoglycan biosynthesis. Catalyzes the direct conversion of tetrahydrodipicolinate to LL-diaminopimelate. This chain is LL-diaminopimelate aminotransferase, found in Synechococcus sp. (strain JA-2-3B'a(2-13)) (Cyanobacteria bacterium Yellowstone B-Prime).